We begin with the raw amino-acid sequence, 247 residues long: MRFPSPLIEGRLVRRYKRFLADVALADGTLVTAHCANPGAMLGLNAEGFRVLLSPSTNPARKLGFSWELVEAELPGGPQWVGINTARPNALVAEAFRENKLAPLAGYETLRAEVAYGKASRVDFLASGGGLPPCHVEVKNCHLMRQAGLAEFPDCKAARSARHMEELAGVVAAGGRAMLIVVIQMRADAFDVARDIDPAFDRALRAALAAGVEAYAYTCAVGPEGVEIAEPVQILTSPASPAGSGTS.

It belongs to the SfsA family.

The polypeptide is Sugar fermentation stimulation protein homolog (Methylorubrum populi (strain ATCC BAA-705 / NCIMB 13946 / BJ001) (Methylobacterium populi)).